A 161-amino-acid polypeptide reads, in one-letter code: Cuticle protein 16.8 (161 aa).

At Gln1 the chain carries Pyrrolidone carboxylic acid. Residues 1–10 (QSEPAGPPQP) are compositionally biased toward pro residues. 2 disordered regions span residues 1–44 (QSEP…YSYT) and 67–103 (ETNE…PAKP). The Chitin-binding type R&amp;R domain occupies 8–74 (PQPYTFSYDN…TVETNEPGTK (67 aa)). Residues 67-86 (ETNEPGTKTSNPADAQIVSN) are compositionally biased toward polar residues. A compositionally biased stretch (low complexity) spans 87-103 (AATDSYSPSPASSPAKP).

Its function is as follows. Component of the cuticle of the tick. Binds chitin. This chain is Cuticle protein 16.8, found in Ixodes ricinus (Common tick).